The chain runs to 194 residues: Thymidine kinase (194 aa).

ATP is bound by residues 9 to 16 and 85 to 88; these read GAMNSGKT and DECQ. The active-site Proton acceptor is the E86. Zn(2+) is bound by residues C143, C146, C180, and H183.

This sequence belongs to the thymidine kinase family. As to quaternary structure, homotetramer.

The protein localises to the cytoplasm. It carries out the reaction thymidine + ATP = dTMP + ADP + H(+). In Enterococcus faecalis (strain ATCC 700802 / V583), this protein is Thymidine kinase.